Reading from the N-terminus, the 878-residue chain is Phosphoenolpyruvate carboxylase (878 aa).

Residues H137 and K545 contribute to the active site.

Belongs to the PEPCase type 1 family. Mg(2+) serves as cofactor.

The catalysed reaction is oxaloacetate + phosphate = phosphoenolpyruvate + hydrogencarbonate. Its function is as follows. Forms oxaloacetate, a four-carbon dicarboxylic acid source for the tricarboxylic acid cycle. This chain is Phosphoenolpyruvate carboxylase, found in Photorhabdus laumondii subsp. laumondii (strain DSM 15139 / CIP 105565 / TT01) (Photorhabdus luminescens subsp. laumondii).